The primary structure comprises 89 residues: MVTCVRCLIAGRVQGVWFRASTKEKAMELGVRGWVRNLPDGRVEALLQGEAEAVEALKKWLWRGPTLAQVVDVQSEMVEIPEIQMFEVR.

In terms of domain architecture, Acylphosphatase-like spans 4–89 (CVRCLIAGRV…IPEIQMFEVR (86 aa)). Catalysis depends on residues Arg-19 and Asn-37.

It belongs to the acylphosphatase family.

It carries out the reaction an acyl phosphate + H2O = a carboxylate + phosphate + H(+). In Nitrosococcus oceani (strain ATCC 19707 / BCRC 17464 / JCM 30415 / NCIMB 11848 / C-107), this protein is Acylphosphatase (acyP).